The following is a 404-amino-acid chain: Tryptophan synthase beta chain (404 aa).

Lys90 carries the post-translational modification N6-(pyridoxal phosphate)lysine.

The protein belongs to the TrpB family. As to quaternary structure, tetramer of two alpha and two beta chains. Pyridoxal 5'-phosphate serves as cofactor.

The catalysed reaction is (1S,2R)-1-C-(indol-3-yl)glycerol 3-phosphate + L-serine = D-glyceraldehyde 3-phosphate + L-tryptophan + H2O. The protein operates within amino-acid biosynthesis; L-tryptophan biosynthesis; L-tryptophan from chorismate: step 5/5. The beta subunit is responsible for the synthesis of L-tryptophan from indole and L-serine. The chain is Tryptophan synthase beta chain (trpB) from Geobacillus stearothermophilus (Bacillus stearothermophilus).